A 449-amino-acid polypeptide reads, in one-letter code: MLDPALLRQHPADLAERLRSTRGFALDTAKLESLESERKHMQVRTQELQSLRNSKSKAIGQAKAKGEDVAALMAEVAGVGDELLHSHGRLTVVQHELEKIYAVIPNLPHADVPLGKSEADNVEQSRWGTPRQFDFPVKDHVELGAPNGWLDGETAVKLSGARFTVLRGPIARLHRALAQFMLDLHVGEHGYEETNVPLLVNADSMRGTGQLPKFEDDLFRIYENEYEGHTDEETGESFYTPTGGVDPDPAYYLIPTSEVPLTNIVRDEIIDAERLPLRMTAHSMCFRAEAGSGGRDTRGMIRQHQFEKVELVTACAPEDSDAEHQRMTRCAEVVLEQLGLPYRKVLLCTGDMGFSAIKTYDLEVWLPSQNTYREISSCSNCGDFQARRMQARWRNPVSGKLELLHTLNGSGTAVGRAMIAVMENYQNADGSIDVPQVLRPYMGGIERIG.

256 to 258 (TSE) serves as a coordination point for L-serine. Residue 287 to 289 (RAE) participates in ATP binding. Glu-310 contacts L-serine. 374–377 (EISS) provides a ligand contact to ATP. Ser-410 contributes to the L-serine binding site.

The protein belongs to the class-II aminoacyl-tRNA synthetase family. Type-1 seryl-tRNA synthetase subfamily. Homodimer. The tRNA molecule binds across the dimer.

The protein localises to the cytoplasm. It catalyses the reaction tRNA(Ser) + L-serine + ATP = L-seryl-tRNA(Ser) + AMP + diphosphate + H(+). The enzyme catalyses tRNA(Sec) + L-serine + ATP = L-seryl-tRNA(Sec) + AMP + diphosphate + H(+). Its pathway is aminoacyl-tRNA biosynthesis; selenocysteinyl-tRNA(Sec) biosynthesis; L-seryl-tRNA(Sec) from L-serine and tRNA(Sec): step 1/1. Its function is as follows. Catalyzes the attachment of serine to tRNA(Ser). Is also able to aminoacylate tRNA(Sec) with serine, to form the misacylated tRNA L-seryl-tRNA(Sec), which will be further converted into selenocysteinyl-tRNA(Sec). The chain is Serine--tRNA ligase from Xanthomonas oryzae pv. oryzae (strain MAFF 311018).